A 274-amino-acid polypeptide reads, in one-letter code: Large ribosomal subunit protein uL2 (274 aa).

The segment at 223–256 is disordered; that stretch reads VVMNPVDHPHGGGEGKTGEGRHPVDPWGNLTKGY. A compositionally biased stretch (basic and acidic residues) spans 229-246; the sequence is DHPHGGGEGKTGEGRHPV.

The protein belongs to the universal ribosomal protein uL2 family. Part of the 50S ribosomal subunit. Forms a bridge to the 30S subunit in the 70S ribosome.

Its function is as follows. One of the primary rRNA binding proteins. Required for association of the 30S and 50S subunits to form the 70S ribosome, for tRNA binding and peptide bond formation. It has been suggested to have peptidyltransferase activity; this is somewhat controversial. Makes several contacts with the 16S rRNA in the 70S ribosome. In Albidiferax ferrireducens (strain ATCC BAA-621 / DSM 15236 / T118) (Rhodoferax ferrireducens), this protein is Large ribosomal subunit protein uL2.